Reading from the N-terminus, the 350-residue chain is Outer membrane protein A (350 aa).

Residues 1 to 21 (MKKTAIAIAVALAGFATVAQA) form the signal peptide. The next 8 beta stranded transmembrane spans lie at 27–37 (TWYAGGKLGWS), 59–70 (QLGAGAFGGYQV), 74–82 (LGFEMGYDW), 100–111 (QAVQLTAKLGYP), 116–124 (LDIYTRLGG), 146–155 (PVFAGGVEWA), 160–167 (IATRLEYQ), and 186–194 (MLSVGVSYR). Tandem repeats lie at residues 205 to 206 (AP), 207 to 208 (AP), 209 to 210 (AP), and 211 to 212 (AP). The interval 205–212 (APAPAPAP) is 4 X 2 AA tandem repeats of A-P. Residues 214 to 342 (VTTKTFTLKS…RVAIEVKGYK (129 aa)) enclose the OmpA-like domain. An intrachain disulfide couples Cys315 to Cys327.

The protein belongs to the outer membrane OOP (TC 1.B.6) superfamily. OmpA family. In terms of assembly, monomer and homodimer.

It localises to the cell outer membrane. With TolR probably plays a role in maintaining the position of the peptidoglycan cell wall in the periplasm. Acts as a porin with low permeability that allows slow penetration of small solutes; an internal gate slows down solute passage. In terms of biological role, required for conjugation with F-type plasmids; probably serves as the mating receptor on recipient cells. In Klebsiella aerogenes (Enterobacter aerogenes), this protein is Outer membrane protein A.